The chain runs to 454 residues: MINILEVNETNKMIEQEKLDVRTITLGISLLDCCDSDLDAFNRNIYDKITRLGKDLVSTGREIELEYGIPIVNKRISVTPIALVAGRACRSEEDFVEVAKTLDKAARDTGVNFLGGYSAIVSKGTTPTDEALIRSIPAALAATGRVCSSVNIGSTKTGINMDAVKLMGEIVRETAEATKENNSLGCAKLVVFCNAPDDNPFMAGAFHGVSEADAVINVGVSGPGVIKHALEDVRGKNFEVLCETVKRTAFKVTRAGQLVAQEASERLGIPFGIVDLSLAPTPSVGDSVAGILEEMGLESVGAPGTTAALALLNDQVKKGGIMASSFVGGLSGAFIPVSEDQGMIDAVNRGALTIEKLEAMTCVCSVGLDMIAIPGDTPASTISGIIADEAAIGMINNKTTAVRLIPVIGKDLGDTVEFGGLLGHAPVQRVNGFGCADFINRGGRIPAPIHSFKN.

The protein belongs to the UPF0210 family.

This Methanoculleus marisnigri (strain ATCC 35101 / DSM 1498 / JR1) protein is UPF0210 protein Memar_2269.